The chain runs to 131 residues: Small ribosomal subunit protein uS8 (131 aa).

It belongs to the universal ribosomal protein uS8 family. As to quaternary structure, part of the 30S ribosomal subunit. Contacts proteins S5 and S12.

Functionally, one of the primary rRNA binding proteins, it binds directly to 16S rRNA central domain where it helps coordinate assembly of the platform of the 30S subunit. The chain is Small ribosomal subunit protein uS8 from Legionella pneumophila (strain Paris).